A 413-amino-acid chain; its full sequence is S-adenosylmethionine synthase (413 aa).

His-15 contacts ATP. Asp-17 provides a ligand contact to Mg(2+). Glu-43 lines the K(+) pocket. L-methionine contacts are provided by Glu-56 and Gln-100. The interval 100-110 (QSPDISQGVNE) is flexible loop. Residues 171-173 (DGK), 248-249 (KF), Asp-257, 263-264 (RK), Ala-280, and Lys-284 contribute to the ATP site. Asp-257 lines the L-methionine pocket. Lys-288 is a binding site for L-methionine.

The protein belongs to the AdoMet synthase family. Homotetramer; dimer of dimers. Mg(2+) is required as a cofactor. It depends on K(+) as a cofactor.

It is found in the cytoplasm. It catalyses the reaction L-methionine + ATP + H2O = S-adenosyl-L-methionine + phosphate + diphosphate. Its pathway is amino-acid biosynthesis; S-adenosyl-L-methionine biosynthesis; S-adenosyl-L-methionine from L-methionine: step 1/1. Its function is as follows. Catalyzes the formation of S-adenosylmethionine (AdoMet) from methionine and ATP. The overall synthetic reaction is composed of two sequential steps, AdoMet formation and the subsequent tripolyphosphate hydrolysis which occurs prior to release of AdoMet from the enzyme. In Prochlorococcus marinus (strain MIT 9215), this protein is S-adenosylmethionine synthase.